Consider the following 446-residue polypeptide: Actin-related protein 6 (446 aa).

Basic residues predominate over residues 1-11 (MTGRGGAKKSR). Residues 1–24 (MTGRGGAKKSRAAGPAPPTTTLVL) are disordered.

This sequence belongs to the actin family. ARP6 subfamily. Component of the SWR1 chromatin remodeling complex.

Its subcellular location is the cytoplasm. The protein localises to the cytoskeleton. It localises to the nucleus. Its function is as follows. Component of the SWR1 complex which mediates the ATP-dependent exchange of histone H2A for the H2A variant H2A.Z leading to transcriptional regulation of selected genes by chromatin remodeling. Involved in chromosome stability. This is Actin-related protein 6 (arp-6) from Neurospora crassa (strain ATCC 24698 / 74-OR23-1A / CBS 708.71 / DSM 1257 / FGSC 987).